The primary structure comprises 122 residues: Probable transcription factor PqrA (122 aa).

The region spanning 7–107 is the HTH araC/xylS-type domain; the sequence is NDILKWLETQ…NTTPAKFREN (101 aa). 2 consecutive DNA-binding regions (H-T-H motif) follow at residues 26 to 47 and 74 to 97; these read DTIA…KDFK and ILDI…KKHF.

Its function is as follows. Upon expression in E.coli strain KY2563 confers resistance to antibiotics ofloxacin, ciprofloxacin, tetracycline, chloramphenicol, and ceftazidime (increases minimal inhibitory concentration by 8-32 times); also decreases expression of OmpF. The protein is Probable transcription factor PqrA of Proteus vulgaris.